A 624-amino-acid chain; its full sequence is Glutaminase 2 (624 aa).

The tract at residues Met-1 to Tyr-20 is disordered. Residues Gly-43 to Leu-325 form a glutaminase region. Ser-85, Asn-134, Glu-178, Asn-185, Tyr-209, Tyr-261, and Val-279 together coordinate substrate. Residues Gln-355 to Ala-466 enclose the STAS domain. Residue Leu-491–Ala-608 coordinates a nucleoside 3',5'-cyclic phosphate.

The protein belongs to the glutaminase family. Homotetramer.

The catalysed reaction is L-glutamine + H2O = L-glutamate + NH4(+). The protein is Glutaminase 2 (glsA2) of Bradyrhizobium diazoefficiens (strain JCM 10833 / BCRC 13528 / IAM 13628 / NBRC 14792 / USDA 110).